Here is a 150-residue protein sequence, read N- to C-terminus: Large ribosomal subunit protein bL9 (150 aa).

This sequence belongs to the bacterial ribosomal protein bL9 family.

Its function is as follows. Binds to the 23S rRNA. This chain is Large ribosomal subunit protein bL9, found in Streptococcus agalactiae serotype Ia (strain ATCC 27591 / A909 / CDC SS700).